Here is a 27-residue protein sequence, read N- to C-terminus: Conotoxin (27 aa).

Intrachain disulfides connect Cys-2-Cys-16, Cys-6-Cys-18, and Cys-12-Cys-23. At Asn-27 the chain carries Asparagine amide.

Expressed by the venom duct.

It localises to the secreted. Probable neurotoxin that inhibits ion channels. The chain is Conotoxin from Conus amadis (Amadis cone).